The following is a 229-amino-acid chain: MGQKVHPNGIRLGITKPWISTWYADKSDYANNLNSDWEVRQYLTEKLKAASVSKIVIERPAKSIRVTIHTARPGIVIGKKGEDVEVLRAYVSKITGTTAQINIAEIRKPELDAKLVADSIAQQLERRVMFRRAMKRAVQNAMRIGAQGIKVQVSGRLGGAEIARAEWYREGRVPLHTLRADIDYSTAESHTQYGVIGIKVWIFKGEVLDGLVPAIEEPKQQPKRKPRGK.

Residues 39–107 (VRQYLTEKLK…TAQINIAEIR (69 aa)) enclose the KH type-2 domain.

The protein belongs to the universal ribosomal protein uS3 family. In terms of assembly, part of the 30S ribosomal subunit. Forms a tight complex with proteins S10 and S14.

Functionally, binds the lower part of the 30S subunit head. Binds mRNA in the 70S ribosome, positioning it for translation. This chain is Small ribosomal subunit protein uS3, found in Shewanella frigidimarina (strain NCIMB 400).